We begin with the raw amino-acid sequence, 420 residues long: Type II methyltransferase M.NmeDI (420 aa).

The interval 1–23 is disordered; sequence MMSLKIQPAVPKKSDKPSATNRD. Residues 56–411 form the SAM-dependent MTase C5-type domain; sequence TLIFSFFSGA…MTLKSYLENH (356 aa). Cys148 is an active-site residue.

The protein belongs to the class I-like SAM-binding methyltransferase superfamily. C5-methyltransferase family.

The enzyme catalyses a 2'-deoxycytidine in DNA + S-adenosyl-L-methionine = a 5-methyl-2'-deoxycytidine in DNA + S-adenosyl-L-homocysteine + H(+). Functionally, a methylase that recognizes the double-stranded sequence 5'-RCCGGB-3', methylates C-2 on both strands, and protects the DNA from cleavage by the NmeDI endonuclease. This chain is Type II methyltransferase M.NmeDI (nmeDIMP), found in Neisseria meningitidis serogroup C.